The following is an 80-amino-acid chain: Large ribosomal subunit protein uL24 (80 aa).

Belongs to the universal ribosomal protein uL24 family. As to quaternary structure, part of the 50S ribosomal subunit.

One of two assembly initiator proteins, it binds directly to the 5'-end of the 23S rRNA, where it nucleates assembly of the 50S subunit. Its function is as follows. One of the proteins that surrounds the polypeptide exit tunnel on the outside of the subunit. The sequence is that of Large ribosomal subunit protein uL24 from Prosthecochloris aestuarii (strain DSM 271 / SK 413).